The sequence spans 197 residues: Peptidyl-tRNA hydrolase (197 aa).

TRNA is bound at residue Tyr23. The active-site Proton acceptor is His28. TRNA is bound by residues Phe73, Asn75, and Asn121.

This sequence belongs to the PTH family. As to quaternary structure, monomer.

The protein localises to the cytoplasm. It carries out the reaction an N-acyl-L-alpha-aminoacyl-tRNA + H2O = an N-acyl-L-amino acid + a tRNA + H(+). In terms of biological role, hydrolyzes ribosome-free peptidyl-tRNAs (with 1 or more amino acids incorporated), which drop off the ribosome during protein synthesis, or as a result of ribosome stalling. Functionally, catalyzes the release of premature peptidyl moieties from peptidyl-tRNA molecules trapped in stalled 50S ribosomal subunits, and thus maintains levels of free tRNAs and 50S ribosomes. In Frankia alni (strain DSM 45986 / CECT 9034 / ACN14a), this protein is Peptidyl-tRNA hydrolase.